Reading from the N-terminus, the 203-residue chain is MSCSLARLCLLTLLSPPLSSAASISPAEPISQAYSLALYMQKNTSALLRTYLQYQGSPLSDPGFSAPELQLSSLPPATAFFKTWHALDDGEWLSLAQRAFLALTQHLQLVEDDQSDLNPGSPILLAQLGAARLRAQGLLGNMAAITTALGLPIPPEEDTLGLAAFGASAFERKCRGYVVTREYGHWTDRAVRDLALLKAKYSA.

An N-terminal signal peptide occupies residues 1-21; it reads MSCSLARLCLLTLLSPPLSSA. N-linked (GlcNAc...) asparagine glycosylation occurs at N43.

The protein belongs to the IL-6 superfamily.

Its subcellular location is the secreted. May have an important role in neuronal precursor development and maturation. In Pan troglodytes (Chimpanzee), this protein is Cardiotrophin-2 (CTF2).